The following is a 348-amino-acid chain: Nicotinate-nucleotide--dimethylbenzimidazole phosphoribosyltransferase (348 aa).

Glu316 functions as the Proton acceptor in the catalytic mechanism.

Belongs to the CobT family.

The enzyme catalyses 5,6-dimethylbenzimidazole + nicotinate beta-D-ribonucleotide = alpha-ribazole 5'-phosphate + nicotinate + H(+). The protein operates within nucleoside biosynthesis; alpha-ribazole biosynthesis; alpha-ribazole from 5,6-dimethylbenzimidazole: step 1/2. In terms of biological role, catalyzes the synthesis of alpha-ribazole-5'-phosphate from nicotinate mononucleotide (NAMN) and 5,6-dimethylbenzimidazole (DMB). The polypeptide is Nicotinate-nucleotide--dimethylbenzimidazole phosphoribosyltransferase (Xanthomonas oryzae pv. oryzae (strain PXO99A)).